Consider the following 484-residue polypeptide: Cysteine desulfurase, mitochondrial (484 aa).

Over residues 29 to 42 (LATSASTSSSTTTS) the composition is skewed to low complexity. The interval 29 to 69 (LATSASTSSSTTTSNAETGELHVSTPLDSPSVHPPDGSSIS) is disordered. Residues 153–154 (AT), N233, Q261, and 281–283 (SSH) each bind pyridoxal 5'-phosphate. The residue at position 284 (K284) is an N6-(pyridoxal phosphate)lysine. T321 is a binding site for pyridoxal 5'-phosphate. The Cysteine persulfide intermediate role is filled by C408. A [2Fe-2S] cluster-binding site is contributed by C408.

Belongs to the class-V pyridoxal-phosphate-dependent aminotransferase family. NifS/IscS subfamily. Requires pyridoxal 5'-phosphate as cofactor.

It is found in the mitochondrion. It carries out the reaction (sulfur carrier)-H + L-cysteine = (sulfur carrier)-SH + L-alanine. In terms of biological role, catalyzes the removal of elemental sulfur from cysteine to produce alanine. It supplies the inorganic sulfur for iron-sulfur (Fe-S) clusters. Plays a role in both tRNA-processing and mitochondrial metabolism. Involved in the 2-thio-modification of both 5-carboxymethylaminomethyl-2-thiouridine in mitochondrial tRNAs and 5-methoxycarbonylmethyl-2-thiouridine (mcm5s2U) in cytoplasmic tRNAs. This Candida maltosa (Yeast) protein is Cysteine desulfurase, mitochondrial.